We begin with the raw amino-acid sequence, 157 residues long: uncharacterized protein (157 aa).

This sequence belongs to the MG067/MG068/MG395 family.

This is an uncharacterized protein from Mycoplasma pneumoniae (strain ATCC 29342 / M129 / Subtype 1) (Mycoplasmoides pneumoniae).